A 622-amino-acid polypeptide reads, in one-letter code: Polymerase acidic protein (622 aa).

This sequence belongs to the influenza viruses PA family. RNA polymerase is composed of three subunits: PA, PB1 and PB2.

Its subcellular location is the virion. The protein localises to the host nucleus. Functionally, subunit of the RNA-dependent RNA polymerase which is responsible for replication and transcription of virus RNA segments. The transcription of viral mRNAs occurs by a unique mechanism called cap-snatching. 5' methylated caps of cellular mRNAs are cleaved after 10-13 nucleotides by PA. In turn, these short capped RNAs are used as primers by PB1 for transcription of viral mRNAs. During virus replication, PB1 initiates RNA synthesis and copy vRNA into complementary RNA (cRNA) which in turn serves as a template for the production of more vRNAs. This chain is Polymerase acidic protein, found in Thogoto virus (isolate SiAr 126) (Tho).